Here is a 476-residue protein sequence, read N- to C-terminus: PRAME family member 5 (476 aa).

The LRR 1; degenerate repeat unit spans residues 97-124 (RWKLQVLDLQDVCENFWMVWSEAMAHGC). One copy of the LRR 2; degenerate repeat lies at 179-203 (HLCCKKLKILGMPFRNIRSILKMVN). One copy of the LRR 3; degenerate repeat lies at 204 to 230 (LDCIQEVEVNCKWVLPILTQFTPYLGH). The stretch at 231–266 (MRNLQKLVLSHMDVSRYVSPEQKKEIVTQFTTQFLK) is one LRR 4; degenerate repeat. LRR repeat units follow at residues 267–292 (LCCL…LSCL), 293–324 (KTSL…SQLK), 325–345 (TLDL…QILL), 349–376 (AATL…ALSR), and 377–401 (CFEL…LLSH).

The protein belongs to the PRAME family.

In Homo sapiens (Human), this protein is PRAME family member 5.